The following is an 87-amino-acid chain: Small ribosomal subunit protein eS21 (87 aa).

Met-1 bears the N-acetylmethionine mark.

The protein belongs to the eukaryotic ribosomal protein eS21 family. As to quaternary structure, component of the small ribosomal subunit (SSU). Mature yeast ribosomes consist of a small (40S) and a large (60S) subunit. The 40S small subunit contains 1 molecule of ribosomal RNA (18S rRNA) and at least 33 different proteins. The large 60S subunit contains 3 rRNA molecules (25S, 5.8S and 5S rRNA) and at least 46 different proteins. Interacts with uS2A and uS2B, strongest interaction is with uS2B.

The protein localises to the cytoplasm. It localises to the nucleus. Component of the ribosome, a large ribonucleoprotein complex responsible for the synthesis of proteins in the cell. The small ribosomal subunit (SSU) binds messenger RNAs (mRNAs) and translates the encoded message by selecting cognate aminoacyl-transfer RNA (tRNA) molecules. The large subunit (LSU) contains the ribosomal catalytic site termed the peptidyl transferase center (PTC), which catalyzes the formation of peptide bonds, thereby polymerizing the amino acids delivered by tRNAs into a polypeptide chain. The nascent polypeptides leave the ribosome through a tunnel in the LSU and interact with protein factors that function in enzymatic processing, targeting, and the membrane insertion of nascent chains at the exit of the ribosomal tunnel. eS21 is required for the processing of the 20S rRNA-precursor to mature 18S rRNA in a late step of the maturation of 40S ribosomal subunits. Has a physiological role leading to 18S rRNA stability. The chain is Small ribosomal subunit protein eS21 (rps21) from Schizosaccharomyces pombe (strain 972 / ATCC 24843) (Fission yeast).